The primary structure comprises 541 residues: Peptidyl-alpha-hydroxyglycine alpha-amidating lyase 1 (541 aa).

The N-terminal stretch at 1–33 is a signal peptide; it reads MKSTDSAKCLGSKSLAICCLLLHLLLCIRPAVS. The Extracellular segment spans residues 34-458; that stretch reads QTQSPQRYLH…VAVHHPSGKA (425 aa). An N-linked (GlcNAc...) asparagine glycan is attached at Asn92. 3 NHL repeats span residues 164–205, 215–258, and 272–314; these read GKVQ…FPPR, LGDA…YSRK, and GISY…FLSS. Cystine bridges form between Cys228-Cys248 and Cys299-Cys310. Asn315 carries an N-linked (GlcNAc...) asparagine glycan. One copy of the NHL 4 repeat lies at 374–418; it reads KQLVSKFGPNNLQFQNPHDVAVTADGNEIYVAELNPMRIHKFVHR. A helical transmembrane segment spans residues 459 to 479; that stretch reads ILVASLMLLFAGSTFALALIF. At 480 to 541 the chain is on the cytoplasmic side; sequence ARRRKRGCLP…TKTLASAQYA (62 aa). The interval 521 to 541 is disordered; it reads LDQQASDEEQETKTLASAQYA.

It belongs to the peptidyl-alpha-hydroxyglycine alpha-amidating lyase family. Requires Zn(2+) as cofactor. In terms of processing, N-glycosylated. As to expression, widely expressed. In mature larvae, it is ubiquitously expressed with a low expression in all cells and a stronger expression in a subset of neurons. Colocalizes with neuropeptide proctolin. In adults, weak expression is observed in most neuronal cell bodies and in scattered large cells throughout the protocerebrum and also in the subesophageal neuromeres (at protein level).

Its subcellular location is the cell membrane. The enzyme catalyses a [peptide]-C-terminal (2S)-2-hydroxyglycine = a [peptide]-C-terminal amide + glyoxylate. Functionally, peptidyl-alpha-hydroxylglycine alpha-amidating lyase that catalyzes an essential reaction in C-terminal alpha-amidation of peptides. Mediates the dismutation of the unstable peptidyl(2-hydroxyglycine) intermediate to glyoxylate and the corresponding desglycine peptide amide. C-terminal amidation of peptides such as neuropeptides is essential for full biological activity. In Drosophila melanogaster (Fruit fly), this protein is Peptidyl-alpha-hydroxyglycine alpha-amidating lyase 1 (Pal1).